The chain runs to 221 residues: Ras-related protein Rab-27A (221 aa).

At Ser-2 the chain carries N-acetylserine. At Ser-2 the chain carries Phosphoserine. GTP is bound at residue 16-24 (GDSGVGKTS). An Effector region motif is present at residues 38 to 46 (FITTVGIDF). GTP-binding positions include 74 to 78 (DTAGQ), 133 to 136 (NKSD), and 163 to 165 (SAA). Cys-123 and Cys-188 form a disulfide bridge. Residues Cys-219 and Cys-221 are each lipidated (S-geranylgeranyl cysteine). Cysteine methyl ester is present on Cys-221.

Belongs to the small GTPase superfamily. Rab family. As to quaternary structure, binds SYTL1, SYTL2, SLAC2B, MYRIP, SYTL3, SYTL4, SYTL5 and MLPH. Interacts with UNC13D. Interacts with RPH3A and RPH3A. Does not interact with the BLOC-3 complex (heterodimer of HPS1 and HPS4). Interacts (GDP-bound form preferentially) with DENND10. In terms of tissue distribution, detected in melanocytes. Expressed abundantly in the stomach and is predominantly localized at the apical region of gastric-surface mucus cells. Also expressed in the thymus and lung.

The protein localises to the membrane. It is found in the melanosome. It localises to the late endosome. The protein resides in the lysosome. It catalyses the reaction GTP + H2O = GDP + phosphate + H(+). Regulated by guanine nucleotide exchange factors (GEFs) which promote the exchange of bound GDP for free GTP, GTPase activating proteins (GAPs) which increase the GTP hydrolysis activity, and GDP dissociation inhibitors which inhibit the dissociation of the nucleotide from the GTPase. Activated by GEFs such as DENND10. In terms of biological role, small GTPase which cycles between active GTP-bound and inactive GDP-bound states. In its active state, binds to a variety of effector proteins to regulate homeostasis of late endocytic pathway, including endosomal positioning, maturation and secretion. Plays a role in cytotoxic granule exocytosis in lymphocytes. Required for both granule maturation and granule docking and priming at the immunologic synapse. This is Ras-related protein Rab-27A (Rab27a) from Mus musculus (Mouse).